We begin with the raw amino-acid sequence, 65 residues long: Large ribosomal subunit protein bL28 (65 aa).

The segment at 1–21 (MPGRDQLTGQKALSGNKRSHA) is disordered.

It belongs to the bacterial ribosomal protein bL28 family.

The protein is Large ribosomal subunit protein bL28 of Metamycoplasma arthritidis (strain 158L3-1) (Mycoplasma arthritidis).